The chain runs to 107 residues: Iron-binding protein IscA (107 aa).

Cysteine 35, cysteine 99, and cysteine 101 together coordinate Fe cation.

It belongs to the HesB/IscA family. Homodimer; may form tetramers and higher multimers. Requires Fe cation as cofactor.

Its function is as follows. Is able to transfer iron-sulfur clusters to apo-ferredoxin. Multiple cycles of [2Fe2S] cluster formation and transfer are observed, suggesting that IscA acts catalytically. Recruits intracellular free iron so as to provide iron for the assembly of transient iron-sulfur cluster in IscU in the presence of IscS, L-cysteine and the thioredoxin reductase system TrxA/TrxB. The protein is Iron-binding protein IscA of Proteus mirabilis (strain HI4320).